The sequence spans 154 residues: Cathelicidin-2 (154 aa).

An N-terminal signal peptide occupies residues methionine 1–alanine 17. The propeptide occupies leucine 18–valine 122. 2 disulfide bridges follow: cysteine 75–cysteine 86 and cysteine 97–cysteine 114.

The protein belongs to the cathelicidin family. Detected in trachea, lung, proventriculus, duodenum, jejunum, ileum, caeca, colon, caecal tonsil, bursa of Fabricius, kidney, ovary, testis, thymus, liver, spleen, bone marrow, skin, uropygial gland, muscle and brain.

Its subcellular location is the secreted. Its function is as follows. Binds bacterial lipopolysaccharide (LPS). Has potent antimicrobial activity against Gram-positive and Gram-negative bacteria (in vitro). Has hemolytic activity (in vitro). May play a role in the innate immune response. The protein is Cathelicidin-2 (CATHL2) of Gallus gallus (Chicken).